The primary structure comprises 85 residues: MREKEGGVVNDDFHYEVTRNWGTLSTSGNGWSLELKSISWNGRPEKYDIRAWSPDKSKMGKGVTLTRAEIVALRDLLNSMSLDPY.

This is an uncharacterized protein from Treponema pallidum (strain Nichols).